The primary structure comprises 340 residues: Phosphoribosylformylglycinamidine cyclo-ligase (340 aa).

Belongs to the AIR synthase family.

The protein localises to the cytoplasm. The catalysed reaction is 2-formamido-N(1)-(5-O-phospho-beta-D-ribosyl)acetamidine + ATP = 5-amino-1-(5-phospho-beta-D-ribosyl)imidazole + ADP + phosphate + H(+). It participates in purine metabolism; IMP biosynthesis via de novo pathway; 5-amino-1-(5-phospho-D-ribosyl)imidazole from N(2)-formyl-N(1)-(5-phospho-D-ribosyl)glycinamide: step 2/2. This is Phosphoribosylformylglycinamidine cyclo-ligase from Streptococcus agalactiae serotype III (strain NEM316).